The sequence spans 235 residues: RING-H2 finger protein ATL17 (235 aa).

A helical membrane pass occupies residues methionine 1 to tyrosine 21. The RING-type; atypical zinc-finger motif lies at cysteine 76–arginine 118. The disordered stretch occupies residues valine 143–lysine 167.

This sequence belongs to the RING-type zinc finger family. ATL subfamily.

The protein resides in the membrane. The catalysed reaction is S-ubiquitinyl-[E2 ubiquitin-conjugating enzyme]-L-cysteine + [acceptor protein]-L-lysine = [E2 ubiquitin-conjugating enzyme]-L-cysteine + N(6)-ubiquitinyl-[acceptor protein]-L-lysine.. It participates in protein modification; protein ubiquitination. Its function is as follows. May be involved in the early steps of the plant defense signaling pathway. This Arabidopsis thaliana (Mouse-ear cress) protein is RING-H2 finger protein ATL17 (ATL17).